The primary structure comprises 254 residues: Cobalt transport protein CbiM (254 aa).

A signal peptide spans 1 to 31; it reads MKTILRPFTLLSRSIFLALFVLFLWSPDAHA. The next 6 membrane-spanning stretches (helical) occupy residues 37–57, 74–94, 106–126, 128–148, 169–189, and 212–232; these read GFLP…FLVV, LLLA…IPSV, LGAV…VLLF, ALLL…SMAI, WLAV…VTSL, and IFAL…VMVF.

Belongs to the CbiM family. As to quaternary structure, forms an energy-coupling factor (ECF) transporter complex composed of an ATP-binding protein (A component, CbiO), a transmembrane protein (T component, CbiQ) and 2 possible substrate-capture proteins (S components, CbiM and CbiN) of unknown stoichimetry.

It is found in the cell inner membrane. It functions in the pathway cofactor biosynthesis; adenosylcobalamin biosynthesis. Its function is as follows. Part of the energy-coupling factor (ECF) transporter complex CbiMNOQ involved in cobalt import. The protein is Cobalt transport protein CbiM of Chlorobium limicola (strain DSM 245 / NBRC 103803 / 6330).